Here is a 78-residue protein sequence, read N- to C-terminus: Large ribosomal subunit protein bL28 (78 aa).

This sequence belongs to the bacterial ribosomal protein bL28 family.

The polypeptide is Large ribosomal subunit protein bL28 (Marinobacter nauticus (strain ATCC 700491 / DSM 11845 / VT8) (Marinobacter aquaeolei)).